We begin with the raw amino-acid sequence, 597 residues long: Elongation factor 4 (597 aa).

The region spanning 2–184 is the tr-type G domain; that stretch reads KNIRNFSIIA…EVVNKIPPPK (183 aa). GTP contacts are provided by residues 14 to 19 and 131 to 134; these read DHGKST and NKID.

The protein belongs to the TRAFAC class translation factor GTPase superfamily. Classic translation factor GTPase family. LepA subfamily.

The protein localises to the cell inner membrane. The catalysed reaction is GTP + H2O = GDP + phosphate + H(+). Functionally, required for accurate and efficient protein synthesis under certain stress conditions. May act as a fidelity factor of the translation reaction, by catalyzing a one-codon backward translocation of tRNAs on improperly translocated ribosomes. Back-translocation proceeds from a post-translocation (POST) complex to a pre-translocation (PRE) complex, thus giving elongation factor G a second chance to translocate the tRNAs correctly. Binds to ribosomes in a GTP-dependent manner. The protein is Elongation factor 4 of Chromobacterium violaceum (strain ATCC 12472 / DSM 30191 / JCM 1249 / CCUG 213 / NBRC 12614 / NCIMB 9131 / NCTC 9757 / MK).